A 955-amino-acid polypeptide reads, in one-letter code: Glycine dehydrogenase (decarboxylating) (955 aa).

Residue Lys-702 is modified to N6-(pyridoxal phosphate)lysine.

Belongs to the GcvP family. In terms of assembly, the glycine cleavage system is composed of four proteins: P, T, L and H. Pyridoxal 5'-phosphate serves as cofactor.

It catalyses the reaction N(6)-[(R)-lipoyl]-L-lysyl-[glycine-cleavage complex H protein] + glycine + H(+) = N(6)-[(R)-S(8)-aminomethyldihydrolipoyl]-L-lysyl-[glycine-cleavage complex H protein] + CO2. Its function is as follows. The glycine cleavage system catalyzes the degradation of glycine. The P protein binds the alpha-amino group of glycine through its pyridoxal phosphate cofactor; CO(2) is released and the remaining methylamine moiety is then transferred to the lipoamide cofactor of the H protein. This chain is Glycine dehydrogenase (decarboxylating), found in Stenotrophomonas maltophilia (strain R551-3).